The sequence spans 141 residues: Hemoglobin subunit alpha-D (141 aa).

A Globin domain is found at methionine 1–arginine 141. Heme b-binding residues include histidine 58 and histidine 87.

This sequence belongs to the globin family. As to quaternary structure, heterotetramer of two alpha-D chains and two beta chains. Red blood cells.

Functionally, involved in oxygen transport from the lung to the various peripheral tissues. This Coturnix japonica (Japanese quail) protein is Hemoglobin subunit alpha-D (HBAD).